The primary structure comprises 374 residues: Queuine tRNA-ribosyltransferase (374 aa).

Asp-89 serves as the catalytic Proton acceptor. Residues 89-93, Asp-143, Gln-187, and Gly-214 each bind substrate; that span reads DSGGF. Residues 245-251 form an RNA binding region; the sequence is GVGKPED. Asp-264 serves as the catalytic Nucleophile. The segment at 269 to 273 is RNA binding; important for wobble base 34 recognition; it reads TRNAR. Positions 302, 304, 307, and 333 each coordinate Zn(2+).

The protein belongs to the queuine tRNA-ribosyltransferase family. In terms of assembly, homodimer. Within each dimer, one monomer is responsible for RNA recognition and catalysis, while the other monomer binds to the replacement base PreQ1. The cofactor is Zn(2+).

It catalyses the reaction 7-aminomethyl-7-carbaguanine + guanosine(34) in tRNA = 7-aminomethyl-7-carbaguanosine(34) in tRNA + guanine. It participates in tRNA modification; tRNA-queuosine biosynthesis. In terms of biological role, catalyzes the base-exchange of a guanine (G) residue with the queuine precursor 7-aminomethyl-7-deazaguanine (PreQ1) at position 34 (anticodon wobble position) in tRNAs with GU(N) anticodons (tRNA-Asp, -Asn, -His and -Tyr). Catalysis occurs through a double-displacement mechanism. The nucleophile active site attacks the C1' of nucleotide 34 to detach the guanine base from the RNA, forming a covalent enzyme-RNA intermediate. The proton acceptor active site deprotonates the incoming PreQ1, allowing a nucleophilic attack on the C1' of the ribose to form the product. After dissociation, two additional enzymatic reactions on the tRNA convert PreQ1 to queuine (Q), resulting in the hypermodified nucleoside queuosine (7-(((4,5-cis-dihydroxy-2-cyclopenten-1-yl)amino)methyl)-7-deazaguanosine). This Shewanella frigidimarina (strain NCIMB 400) protein is Queuine tRNA-ribosyltransferase.